A 117-amino-acid polypeptide reads, in one-letter code: Tyrosine-protein phosphatase 25 (117 aa).

One can recognise a Tyrosine-protein phosphatase domain in the interval tryptophan 1–valine 117. Aspartate 85 contributes to the substrate binding site.

It belongs to the protein-tyrosine phosphatase family.

The catalysed reaction is O-phospho-L-tyrosyl-[protein] + H2O = L-tyrosyl-[protein] + phosphate. In Styela plicata (Wrinkled sea squirt), this protein is Tyrosine-protein phosphatase 25 (STY-25).